Reading from the N-terminus, the 669-residue chain is Cell surface receptor daf-1 (669 aa).

A signal peptide spans 1–19 (MRIRHVVFCLLALVYGAET). Topologically, residues 20–170 (SDDDLDERTN…APGPQQSSTW (151 aa)) are extracellular. 4 N-linked (GlcNAc...) asparagine glycosylation sites follow: N49, N79, N133, and N154. Residues 171 to 191 (LILTILALLTFIVLLGIAIFL) traverse the membrane as a helical segment. At 192-669 (TRKSWEAKFD…NDDSSRPLLG (478 aa)) the chain is on the cytoplasmic side. A GS domain is found at 262-292 (NNMKDMLDVLEETSGSGMGPTTLHKLTIGGQ). The region spanning 293 to 593 (IRLTGRVGSG…KRMDERQQLL (301 aa)) is the Protein kinase domain. ATP contacts are provided by residues 299–307 (VGSGRFGNV) and K320. D423 functions as the Proton acceptor in the catalytic mechanism. Composition is skewed to basic and acidic residues over residues 611–624 (DRKILGPQKPKDES) and 633–650 (VQKEIDREDEQENWRETA). Residues 611 to 669 (DRKILGPQKPKDESPANGAPRIVQKEIDREDEQENWRETAKTPNGHISSNDDSSRPLLG) are disordered. Polar residues predominate over residues 651–661 (KTPNGHISSND).

This sequence belongs to the protein kinase superfamily. TKL Ser/Thr protein kinase family. TGFB receptor subfamily. As to quaternary structure, may interact with daf-4 to regulate dauer larva development. As to expression, head and ventral nerve cord from embryos to adults. Expressed in many sensory neurons. Subset of head neurons show coexpression with daf-4 when dauer/nondauer decision is made. Also expressed in non-neuronal cells: membraneous sheath surrounding the distal end of the intestine and in the distal tip cell of the gonad.

It is found in the membrane. It carries out the reaction L-threonyl-[receptor-protein] + ATP = O-phospho-L-threonyl-[receptor-protein] + ADP + H(+). It catalyses the reaction L-seryl-[receptor-protein] + ATP = O-phospho-L-seryl-[receptor-protein] + ADP + H(+). Its function is as follows. Probably involved in a TGF-beta pathway. May be a receptor for TGF-beta-like ligand daf-7. Controls the decision of whether or not larvae enter a developmentally arrested state, known as dauer, in response to environmental conditions. Involved in regulating entry into quiescence triggered by satiety. Involved in sensitivity to CO2 levels. In AWC neurons, acts to promote expression of srsx-3, a member of the GPCR family. This chain is Cell surface receptor daf-1 (daf-1), found in Caenorhabditis elegans.